We begin with the raw amino-acid sequence, 197 residues long: Xanthine phosphoribosyltransferase (197 aa).

Xanthine contacts are provided by Leu20 and Thr27. 5-phospho-alpha-D-ribose 1-diphosphate is bound at residue 128 to 132 (ANGQA). Lys156 is a binding site for xanthine.

Belongs to the purine/pyrimidine phosphoribosyltransferase family. Xpt subfamily. As to quaternary structure, homodimer.

Its subcellular location is the cytoplasm. The enzyme catalyses XMP + diphosphate = xanthine + 5-phospho-alpha-D-ribose 1-diphosphate. The protein operates within purine metabolism; XMP biosynthesis via salvage pathway; XMP from xanthine: step 1/1. Functionally, converts the preformed base xanthine, a product of nucleic acid breakdown, to xanthosine 5'-monophosphate (XMP), so it can be reused for RNA or DNA synthesis. This Lactococcus lactis subsp. cremoris (strain MG1363) protein is Xanthine phosphoribosyltransferase.